Consider the following 120-residue polypeptide: NAD(P)H-quinone oxidoreductase subunit 3 (120 aa).

Helical transmembrane passes span 6 to 26, 64 to 84, and 89 to 109; these read GYDA…LALV, MFAL…PWAV, and LGLL…VALA.

This sequence belongs to the complex I subunit 3 family. As to quaternary structure, NDH-1 can be composed of about 15 different subunits; different subcomplexes with different compositions have been identified which probably have different functions.

The protein localises to the cellular thylakoid membrane. The enzyme catalyses a plastoquinone + NADH + (n+1) H(+)(in) = a plastoquinol + NAD(+) + n H(+)(out). It catalyses the reaction a plastoquinone + NADPH + (n+1) H(+)(in) = a plastoquinol + NADP(+) + n H(+)(out). Functionally, NDH-1 shuttles electrons from an unknown electron donor, via FMN and iron-sulfur (Fe-S) centers, to quinones in the respiratory and/or the photosynthetic chain. The immediate electron acceptor for the enzyme in this species is believed to be plastoquinone. Couples the redox reaction to proton translocation, and thus conserves the redox energy in a proton gradient. Cyanobacterial NDH-1 also plays a role in inorganic carbon-concentration. The sequence is that of NAD(P)H-quinone oxidoreductase subunit 3 from Prochlorococcus marinus (strain MIT 9313).